A 112-amino-acid polypeptide reads, in one-letter code: cAMP-regulated phosphoprotein 19 (112 aa).

The segment covering 1–11 (MSAESPEPASA) has biased composition (low complexity). The tract at residues 1–48 (MSAESPEPASAEEQKEMEDKVISPEKAEEAKLKARYPHLGQKPGGSDF) is disordered. Serine 2 is subject to N-acetylserine. The segment covering 12 to 32 (EEQKEMEDKVISPEKAEEAKL) has biased composition (basic and acidic residues). A phosphoserine; by GWL mark is found at serine 62 and serine 104. The tract at residues 73–112 (KNKQLPTAAPDKTEVTGDHIPTPQDLPQRKPSLVASKLAG) is disordered. The residue at position 104 (serine 104) is a Phosphoserine; by PKA.

Belongs to the endosulfine family. In terms of assembly, interacts (when phosphorylated at Ser-62) with PPP2R2D. Phosphorylation at Ser-62 by MASTL/GWL during mitosis is essential for interaction with PPP2R2D (PR55-delta) and subsequent inactivation of PP2A.

It is found in the cytoplasm. Functionally, protein phosphatase inhibitor that specifically inhibits protein phosphatase 2A (PP2A) during mitosis. Inhibition of PP2A is enhanced when ARPP19 is phosphorylated. When phosphorylated at Ser-62 during mitosis, specifically interacts with PPP2R2D (PR55-delta) and inhibits its activity, leading to inactivation of PP2A, an essential condition to keep cyclin-B1-CDK1 activity high during M phase. This Gallus gallus (Chicken) protein is cAMP-regulated phosphoprotein 19 (ARPP19).